A 419-amino-acid polypeptide reads, in one-letter code: MIQTGFGRTSALEGFEQPFDPAQAIDLESPLTSTDTSVENTTRNAGALWPSSQPLSPWERFCRWVTSTENRIYIGWFGMLAIPTLATAAIVFVLAIIAAPAVDMDGTGRMVSGSLLDGNNLITAAVVPTSAAIGLHFYPIWEAASLDEWLINGGPYQLIVLHFIIGIISYQDREWELSYRLKMRPWISLAFTAPVAASVSVLLVYPVGQGGFASGMPLGISGTFTFMMQFQADHNILASPLHQMGVIGVLGGALLCAVHGSLVTSTVCRAPAQTMALTTTKTGTDRQKPKKAKTYSFEHAQAYQQTLLWRGAKFNSSRAVHFCLAALPVAGIWSAAIGVDLAAFDFDRLSFELPSHISVRKTVVPTWSDVVNQANLGIHTVGEKTPPKFSESGFPEFKLSEFVEPIAEDSASTLLSPHS.

Transmembrane regions (helical) follow at residues 73–90 (YIGW…TAAI), 162–177 (HFII…EWEL), 186–200 (WISL…ASVS), 241–262 (LHQM…HGSL), and 323–337 (CLAA…SAAI). An a chlorophyll-binding site is contributed by histidine 162. Histidine 242 serves as a coordination point for a chlorophyll.

This sequence belongs to the reaction center PufL/M/PsbA/D family. As to quaternary structure, homodimer.

The protein resides in the cellular thylakoid membrane. Synthesizes chlorophyll f or chlorophyllide f (Chl f, 2-formyl chlorophyll a), probably by oxidation of chlorophyll a or chlorophyllide a and reduction of plastoquinone. The reaction is probably light-dependent. Chl f absorbs far red light (FRL, 707 nm in 100% methanol), and is synthesized when cells are grown in FRL, where it provides the advantage of extending the spectral range of harvested light in terrestrial cyanobacteria. Chl f synthesis is probably light-dependent. The sequence is that of Light-dependent chlorophyll f synthase from Synechococcus sp. (strain ATCC 29403 / PCC 7335).